The primary structure comprises 226 residues: Large ribosomal subunit protein uL1 (226 aa).

The protein belongs to the universal ribosomal protein uL1 family. In terms of assembly, part of the 50S ribosomal subunit.

Binds directly to 23S rRNA. The L1 stalk is quite mobile in the ribosome, and is involved in E site tRNA release. Functionally, protein L1 is also a translational repressor protein, it controls the translation of the L11 operon by binding to its mRNA. The protein is Large ribosomal subunit protein uL1 of Borreliella afzelii (strain PKo) (Borrelia afzelii).